The chain runs to 282 residues: MAPISSTRPSHSIAADNPNPTTQVNFNTNMTETTIFYKSHNPGGESILLIHGGFSDGSEWDGVWPLLAEHNYHLLLPDMPSHGNSVDIHPFEIDDTVRRLAALIKAEARGGLAHVVGISIGGHIAAALASQHPSCVLSLIVSGFNIFTPNLFTPVLPLFVYGVQRGSGFARQPFAEWDRFCRGLGSLALTQDVFNILISSRELQTIECRTLVVAATRPGVSADNIDHSRRLFETVVAGNGSQVVQHRGMRHPWNEEEPKVFADMVKRWIITQELPDGFEVIP.

A compositionally biased stretch (polar residues) spans 1 to 10 (MAPISSTRPS). A disordered region spans residues 1 to 22 (MAPISSTRPSHSIAADNPNPTT). Residues 22 to 270 (TQVNFNTNMT…FADMVKRWII (249 aa)) form the AB hydrolase-1 domain.

The protein belongs to the AB hydrolase superfamily.

Its pathway is mycotoxin biosynthesis. In terms of biological role, AB hydrolase superfamily protein; part of the gene cluster that mediates the biosynthesis of gramillins A and B, bicyclic lipopeptides that induce cell death in maize leaves but not in wheat leaves. The nonribosomal peptide synthetase GRA1 incorporates respectively a glutamic adic (Glu), a leucine (Leu), a serine (Ser), a hydroxyglutamine (HOGln), a 2-amino decanoic acid, and 2 cysteins (CysB and CysA). The biosynthesis of 2-amino decanoic acid incorporated in gramillins could be initiated by a fatty acid synthase composed of the alpha and beta subunits FGSG_00036 and FGSG_11656. The cytochrome P450 monooxygenase FGSG_15680 could hydroxylate the fatty acid chain. Subsequent oxidation to the ketone by the oxidoreductase FGSG_00048 and transamination by aminotransferase FGSG_00049 could form 2-amino-decanoic acid. On the other hand, FGSG_15680 could also be responsible for the HO-modified glutamine at the gamma-position. Whether hydroxylation occurs on the fully assembled product or on the Gln residue prior to assembly into the gramillins requires further proof. The thioredoxin FGSG_00043 could also be required for the disulfide-bond formation between CysA and CysB. The specific involvement of the remaining proteins from the cluster is more difficult to discern, but could have broader regulatory (FGSG_00040 and FGSG_11657) or enzymatic functions (FGSG_00044 and FGSG_00045). The final C-domain of GRA1 does not possess the expected sequence of a termination CT domain, often implicated in macrocyclization and release of a cyclopeptidein fungal NRPs; and the thioesterase FGSG_00047 may act in concert with the terminal C-domain of GRA1 to catalyze the formation of the macrocyclic anhydride and release of the products. This Gibberella zeae (strain ATCC MYA-4620 / CBS 123657 / FGSC 9075 / NRRL 31084 / PH-1) (Wheat head blight fungus) protein is AB hydrolase superfamily protein FGSG_00045.